The primary structure comprises 96 residues: Large ribosomal subunit protein uL23 (96 aa).

Belongs to the universal ribosomal protein uL23 family. Part of the 50S ribosomal subunit. Contacts protein L29, and trigger factor when it is bound to the ribosome.

One of the early assembly proteins it binds 23S rRNA. One of the proteins that surrounds the polypeptide exit tunnel on the outside of the ribosome. Forms the main docking site for trigger factor binding to the ribosome. In Solidesulfovibrio magneticus (strain ATCC 700980 / DSM 13731 / RS-1) (Desulfovibrio magneticus), this protein is Large ribosomal subunit protein uL23.